The chain runs to 210 residues: Putative 3-methyladenine DNA glycosylase (210 aa).

This sequence belongs to the DNA glycosylase MPG family.

The protein is Putative 3-methyladenine DNA glycosylase of Lactobacillus helveticus (strain DPC 4571).